The chain runs to 85 residues: uncharacterized protein (85 aa).

Belongs to the SF3B5 family.

This is an uncharacterized protein from Schizosaccharomyces pombe (strain 972 / ATCC 24843) (Fission yeast).